Here is a 265-residue protein sequence, read N- to C-terminus: Undecaprenyl-diphosphatase 1 (265 aa).

A run of 7 helical transmembrane segments spans residues 4–24 (IITAFILGIVEGLAEFLPISS), 42–62 (AKTFEIVIQLGAILAIAILYH), 84–104 (FHVFLGVFPAVVAGLLLHDVI), 108–128 (LFQPYTVVIGLVAGAILMIFA), 184–204 (SEFSFLIALPVMVGATGLDLL), 217–237 (MFAVGFITSFIVAMLAVVTFL), and 245–265 (LKPFAYYRILLAILFTVFVLL).

This sequence belongs to the UppP family.

The protein localises to the cell membrane. It carries out the reaction di-trans,octa-cis-undecaprenyl diphosphate + H2O = di-trans,octa-cis-undecaprenyl phosphate + phosphate + H(+). Functionally, catalyzes the dephosphorylation of undecaprenyl diphosphate (UPP). Confers resistance to bacitracin. The protein is Undecaprenyl-diphosphatase 1 of Bacillus anthracis.